A 131-amino-acid polypeptide reads, in one-letter code: uncharacterized protein (131 aa).

This is an uncharacterized protein from Homo sapiens (Human).